Consider the following 162-residue polypeptide: uncharacterized protein (162 aa).

This is an uncharacterized protein from Methanocaldococcus jannaschii (strain ATCC 43067 / DSM 2661 / JAL-1 / JCM 10045 / NBRC 100440) (Methanococcus jannaschii).